Reading from the N-terminus, the 623-residue chain is Probable lysophospholipase 5 (623 aa).

The N-terminal stretch at 1 to 19 (MKLSSFGLFLALQLLPALG) is a signal peptide. The region spanning 67-607 (ACPSGSLLRP…NQYCWNGTIA (541 aa)) is the PLA2c domain. Asn-118, Asn-153, Asn-187, Asn-232, Asn-256, Asn-264, Asn-293, Asn-331, Asn-360, Asn-367, Asn-400, Asn-403, Asn-474, Asn-508, Asn-513, Asn-537, Asn-564, Asn-586, and Asn-603 each carry an N-linked (GlcNAc...) asparagine glycan.

It belongs to the lysophospholipase family.

It is found in the secreted. It carries out the reaction a 1-acyl-sn-glycero-3-phosphocholine + H2O = sn-glycerol 3-phosphocholine + a fatty acid + H(+). Catalyzes the release of fatty acids from lysophospholipids. The protein is Probable lysophospholipase 5 (plb5) of Schizosaccharomyces pombe (strain 972 / ATCC 24843) (Fission yeast).